Reading from the N-terminus, the 149-residue chain is Ribonuclease-like 3 (149 aa).

Residues 1–22 (MGIHQCTAVVLLLLCASLSTYG) form the signal peptide. Pyrrolidone carboxylic acid is present on Q23. The Proton acceptor role is filled by H38. Intrachain disulfides connect C48/C109, C66/C120, and C84/C135. 67–71 (KEVNT) serves as a coordination point for substrate. Residue H142 is the Proton donor of the active site.

It belongs to the pancreatic ribonuclease family. In terms of processing, cleavage between Arg-55 and Arg-56 is catalyzed by a membrane-localized Gram-negative bacterium protease (OmpT in E.coli). The excised fragment is then transported to the bacterium cytosol for cleavage of the disulfide bridge linking Cys-48 and Cys-109, thus separating the N-terminal and LF-ZF3. LF-ZF3 but not the N-terminal peptide possesses bactericidal activity. In terms of tissue distribution, strongly expressed in the adult liver and gut, and weakly in the heart and testis.

It is found in the secreted. Functionally, ribonuclease. Angiogenic. Plays a role in host defense. Exhibits strong antibacterial activity against Gram-negative bacteria but mild antibacterial activity against Gram-positive bacteria. The RNase activity is not required for the bactericidal activity. The polypeptide is Ribonuclease-like 3 (Danio rerio (Zebrafish)).